The following is a 219-amino-acid chain: MSGLSGPLSWPGPLLSALLFLFLLGPSSVLGISFHLPVNSRKCLREEIHKDLLVTGAYEITDQSGGAGGLRTHLKITDSAGHILYAKEDATKGKFAFTTEDYDMFEVCFESKGTGRIPDQLVILDMKHGVEAKNYEEIAKVEKLKPLEVELRRLEDLSESIVNDFAYMKKREEEMRDTNESTNTRVLYFSIFSMFCLIGLATWQVFYLRRFFKAKKLIE.

Positions 1-31 (MSGLSGPLSWPGPLLSALLFLFLLGPSSVLG) are cleaved as a signal peptide. The tract at residues 1–142 (MSGLSGPLSW…KNYEEIAKVE (142 aa)) is required for interaction with STX17. Residues 32 to 185 (ISFHLPVNSR…RDTNESTNTR (154 aa)) are Lumenal-facing. In terms of domain architecture, GOLD spans 41–193 (RKCLREEIHK…TRVLYFSIFS (153 aa)). A required for TMED10 and TMED2 cis-Golgi network localization region spans residues 147-178 (LEVELRRLEDLSESIVNDFAYMKKREEEMRDT). 2 positions are modified to dimethylated arginine: R171 and R176. N-linked (GlcNAc...) asparagine glycosylation occurs at N179. The helical transmembrane segment at 186–206 (VLYFSIFSMFCLIGLATWQVF) threads the bilayer. Positions 204–219 (QVFYLRRFFKAKKLIE) are interaction with COPG1. Residues 207-219 (YLRRFFKAKKLIE) lie on the Cytoplasmic side of the membrane. The tract at residues 207 to 219 (YLRRFFKAKKLIE) is interaction with ARF1 and IL1B. Residues 211 to 212 (FF) carry the COPII vesicle coat-binding motif. Residues 211–219 (FFKAKKLIE) carry the COPI vesicle coat-binding motif.

This sequence belongs to the EMP24/GP25L family. As to quaternary structure, predominantly dimeric and to a lesser extent monomeric in the ER. Monomer and dimer in ERGIC and cis-Golgi network. Forms homooligomer (via GOLD domain); the assembly is promoted by direct binding with leaderless cargos and may form a protein channel that facilitates cargo entry into the ERGIC. Forms heterooligomeric complexes with other members of the p24 family such as TMED2, TMED7 and TMED9. Interacts (via GOLD domain) with TMED2 (via GOLD domain); the complex is required for export of TMED10 from the ER to the cis-Golgi network; the complex is proposed to be involved in cis-Golgi network dynamics and / or biogenesis. Associates with the COPI vesicle coat subunits (coatomer). Tetramerization of the cytoplasmic domain at the Golgi membrane in vitro; the complex is proposed to interact with COPI coatomer and induce budding of the vesicles. Interacts with COPG1; the interaction involves TMED10 homodimer. Interacts with ARF1 (GDP-bound); the interaction probably involves a TMED10 oligomer. Interacts with SEC23A, SEC24B, SEC24C and SEC24D components of the coat protein complex II/COPII, indicative of an association of TMED10 with the COPII vesicle coat. Interacts with CD59. Interacts with MPPE1/PGAP5; the complex might recruit and sort GPI-anchored proteins to the ER-exit site, or the interaction might lead to recycling of PGAP5 between the ER and the Golgi. Interacts with F2LR1/PAR2. Interacts with KDELR2/ERD2; the interaction is disrupted by KDELR2 ligand. Found in a complex composed at least of SURF4, TMED2 and TMED10. Associates with the presenilin-dependent gamma-secretase complex. Interacts with STX17; the interaction is direct. Interacts with IL-1; the interaction is direct. Interacts with RAB21 (active GTP-bound form); the interaction is indirect and regulates TMED10 abundance and localization at the Golgi. Ubiquitous.

The protein localises to the endoplasmic reticulum membrane. Its subcellular location is the endoplasmic reticulum-Golgi intermediate compartment membrane. The protein resides in the golgi apparatus membrane. It localises to the golgi apparatus. It is found in the cis-Golgi network membrane. The protein localises to the trans-Golgi network membrane. Its subcellular location is the cytoplasmic vesicle. The protein resides in the secretory vesicle membrane. It localises to the cell membrane. It is found in the melanosome. Functionally, cargo receptor involved in protein vesicular trafficking and quality control in the endoplasmic reticulum (ER) and Golgi. The p24 protein family is a group of transmembrane proteins that bind coat protein complex I/COPI and coat protein complex II/COPII involved in vesicular trafficking between the membranes. Acts at the lumenal side for incorporation of secretory cargo molecules into transport vesicles and involved in vesicle coat formation at the cytoplasmic side. Mainly functions in the early secretory pathway and cycles between the ER, ER-Golgi intermediate compartment (ERGIC) and Golgi, mediating cargo transport through COPI and COPII-coated vesicles. In COPII vesicle-mediated anterograde transport, involved in the transport of GPI-anchored proteins by acting together with TMED2 as their cargo receptor; the function specifically implies SEC24C and SEC24D of the COPII vesicle coat and lipid raft-like microdomains of the ER. Recognizes GPI anchors structural remodeled in the ER by the GPI inositol-deacylase/PGAP1 and the metallophosphoesterase MPPE1/PGAP5. In COPI vesicle-mediated retrograde transport, involved in the biogenesis of COPI vesicles and vesicle coat recruitment. Involved in trafficking of amyloid beta A4 protein and soluble APP-beta release (independent from the modulation of gamma-secretase activity). Involved in the KDELR2-mediated retrograde transport of the toxin A subunit (CTX-A-K63)together with COPI and the COOH terminus of KDELR2. On Golgi membranes, acts as a primary receptor for ARF1-GDP, a GTP-binding protein involved in COPI-vesicle formation. Increases coatomer-dependent GTPase-activating activity of ARFGAP2 which mediates the hydrolysis of ARF1-bound GTP and therefore modulates protein trafficking from the Golgi apparatus. Involved in the exocytic trafficking of G protein-coupled receptors F2LR1/PAR2 (trypsin and tryspin-like enzyme receptor), OPRM1 (opioid receptor) and P2RY4 (UTD and UDP receptor) from the Golgi to the plasma membrane, thus contributing to receptor resensitization. In addition to its cargo receptor activity, may also act as a protein channel after oligomerization, facilitating the post-translational entry of leaderless cytoplasmic cargo into the ERGIC. Involved in the translocation into ERGIC, the vesicle entry and the secretion of leaderless cargos (lacking the secretion signal sequence), including the mature form of interleukin 1/IL-1 family members, the alpha-crystallin B chain HSPB5, the carbohydrate-binding proteins galectin-1/LGALS1 and galectin-3/LGALS3, the microtubule-associated protein Tau/MAPT, and the annexin A1/ANXA1; the translocation process is dependent on cargo protein unfolding and enhanced by chaperones HSP90AB1 and HSP90B1/GRP9. Could also associates with the presenilin-dependent gamma-secretase complex in order to regulate gamma-cleavages of the amyloid beta A4 protein to yield amyloid-beta 40/Abeta40. The protein is Transmembrane emp24 domain-containing protein 10 of Rattus norvegicus (Rat).